The sequence spans 491 residues: Ribulose-1,5 bisphosphate carboxylase/oxygenase large subunit N-methyltransferase, chloroplastic (491 aa).

An SET domain is found at 67 to 291 (EGVVTTKTPV…AGDQLFIQYD (225 aa)).

It belongs to the class V-like SAM-binding methyltransferase superfamily. Plant protein-lysine LSMT methyltransferase family.

It localises to the plastid. The protein resides in the chloroplast. It carries out the reaction L-lysyl-[ribulose-1,5-bisphosphate carboxylase] + 3 S-adenosyl-L-methionine = N(6),N(6),N(6)-trimethyl-L-lysyl-[ribulose-1,5-bisphosphate carboxylase] + 3 S-adenosyl-L-homocysteine + 3 H(+). Methylates 'Lys-14' of the large subunit of RuBisCO. In Nicotiana tabacum (Common tobacco), this protein is Ribulose-1,5 bisphosphate carboxylase/oxygenase large subunit N-methyltransferase, chloroplastic (RBCMT).